Reading from the N-terminus, the 306-residue chain is Apolipoprotein E (306 aa).

Residues 1–18 form the signal peptide; it reads MKVLWAVLVVTLLAGCQA. 8 tandem repeats follow at residues 81–102, 103–124, 125–146, 147–168, 169–190, 191–212, 213–230, and 231–252. The 8 X 22 AA approximate tandem repeats stretch occupies residues 81–252; it reads VLMEDTMKEV…RLDVVREQME (172 aa). Methionine sulfoxide is present on Met-144. At Ser-148 the chain carries Phosphoserine. The tract at residues 159–169 is LDL and other lipoprotein receptors binding; that stretch reads HLRKLRKRLLR. Position 163–166 (163–166) interacts with heparin; that stretch reads LRKR. Positions 211 to 280 are lipid-binding and lipoprotein association; sequence AAQTSQPLRE…GWFEPVVEDM (70 aa). 226–233 is a heparin binding site; it reads GERLRGRL. The tract at residues 268–280 is specificity for association with VLDL; sequence RLKGWFEPVVEDM.

The protein belongs to the apolipoprotein A1/A4/E family. In terms of assembly, homotetramer. May interact with ABCA1; functionally associated with ABCA1 in the biogenesis of HDLs. May interact with APP/A4 amyloid-beta peptide; the interaction is extremely stable in vitro but its physiological significance is unclear. May interact with MAPT. May interact with MAP2. In the cerebrospinal fluid, interacts with secreted SORL1. Interacts with PMEL; this allows the loading of PMEL luminal fragment on ILVs to induce fibril nucleation. Post-translationally, APOE exists as multiple glycosylated and sialylated glycoforms within cells and in plasma. The extent of glycosylation and sialylation are tissue and context specific. In terms of processing, glycated in plasma VLDL. Phosphorylated by FAM20C in the extracellular medium.

It is found in the secreted. The protein localises to the extracellular space. Its subcellular location is the extracellular matrix. The protein resides in the extracellular vesicle. It localises to the endosome. It is found in the multivesicular body. Functionally, APOE is an apolipoprotein, a protein associating with lipid particles, that mainly functions in lipoprotein-mediated lipid transport between organs via the plasma and interstitial fluids. APOE is a core component of plasma lipoproteins and is involved in their production, conversion and clearance. Apolipoproteins are amphipathic molecules that interact both with lipids of the lipoprotein particle core and the aqueous environment of the plasma. As such, APOE associates with chylomicrons, chylomicron remnants, very low density lipoproteins (VLDL) and intermediate density lipoproteins (IDL) but shows a preferential binding to high-density lipoproteins (HDL). It also binds a wide range of cellular receptors including the LDL receptor/LDLR, the LDL receptor-related proteins LRP1, LRP2 and LRP8 and the very low-density lipoprotein receptor/VLDLR that mediate the cellular uptake of the APOE-containing lipoprotein particles. Finally, APOE also has a heparin-binding activity and binds heparan-sulfate proteoglycans on the surface of cells, a property that supports the capture and the receptor-mediated uptake of APOE-containing lipoproteins by cells. A main function of APOE is to mediate lipoprotein clearance through the uptake of chylomicrons, VLDLs, and HDLs by hepatocytes. APOE is also involved in the biosynthesis by the liver of VLDLs as well as their uptake by peripheral tissues ensuring the delivery of triglycerides and energy storage in muscle, heart and adipose tissues. By participating in the lipoprotein-mediated distribution of lipids among tissues, APOE plays a critical role in plasma and tissues lipid homeostasis. APOE is also involved in two steps of reverse cholesterol transport, the HDLs-mediated transport of cholesterol from peripheral tissues to the liver, and thereby plays an important role in cholesterol homeostasis. First, it is functionally associated with ABCA1 in the biogenesis of HDLs in tissues. Second, it is enriched in circulating HDLs and mediates their uptake by hepatocytes. APOE also plays an important role in lipid transport in the central nervous system, regulating neuron survival and sprouting. The protein is Apolipoprotein E (APOE) of Hystrix brachyura (Malayan porcupine).